Consider the following 421-residue polypeptide: Stemmadenine O-acetyltransferase (421 aa).

The segment at 1–21 (MAPQMQILSEELIQPSSPTPQ) is disordered. Active-site proton acceptor residues include histidine 160 and aspartate 362.

The protein belongs to the plant acyltransferase family. As to quaternary structure, monomer. As to expression, expressed in leaf epidermis.

It carries out the reaction 15alpha-stemmadenine + acetyl-CoA = O-acetyl-15alpha-stemmadenine + CoA. Its pathway is alkaloid biosynthesis. In terms of biological role, component of iboga and aspidosperma monoterpenoid indole alkaloids (MIAs, e.g. tabersonine and catharanthine) biosynthesis pathway from 19E-geissoschizine. Acetyltransferase that catalyzes the formation of O-acetylstemmadenine from stemmadenine. The protein is Stemmadenine O-acetyltransferase of Catharanthus roseus (Madagascar periwinkle).